The chain runs to 648 residues: Penicillin-binding protein PbpB (648 aa).

Positions Met-1 to Glu-35 are disordered. A helical membrane pass occupies residues Gly-52 to Val-72. The active-site Acyl-ester intermediate is the Ser-355.

The protein belongs to the transpeptidase family. In terms of assembly, interacts with Wag31.

It is found in the cell membrane. In Mycolicibacterium smegmatis (strain ATCC 700084 / mc(2)155) (Mycobacterium smegmatis), this protein is Penicillin-binding protein PbpB (pbpB).